We begin with the raw amino-acid sequence, 212 residues long: Putative protein phosphatase 2C 53 (212 aa).

The PPM-type phosphatase domain maps to 1–208; that stretch reads MEDRFSAITN…DDISVMLIPL (208 aa). A Mn(2+)-binding site is contributed by Asp-199.

This sequence belongs to the PP2C family. The cofactor is Mg(2+). Requires Mn(2+) as cofactor.

The enzyme catalyses O-phospho-L-seryl-[protein] + H2O = L-seryl-[protein] + phosphate. It catalyses the reaction O-phospho-L-threonyl-[protein] + H2O = L-threonyl-[protein] + phosphate. This chain is Putative protein phosphatase 2C 53, found in Arabidopsis thaliana (Mouse-ear cress).